Reading from the N-terminus, the 382-residue chain is uncharacterized protein (382 aa).

The next 12 helical transmembrane spans lie at 8–28 (VMLL…LNTL), 45–65 (MVSS…GYLI), 75–95 (YLAS…VGFW), 102–122 (FIAG…LMCS), 131–151 (LLAA…LLVS), 157–177 (LLHV…PLLF), 204–224 (LGVN…GLMP), 231–251 (GMAN…GILG), 270–290 (VQVF…AMAP), 291–311 (ALFI…AWAC), 325–345 (ALLL…AMLM), and 349–369 (SDNL…LMLL).

It belongs to the major facilitator superfamily. YcaD (TC 2.A.1.26) family.

It localises to the cell inner membrane. This is an uncharacterized protein from Salmonella paratyphi B (strain ATCC BAA-1250 / SPB7).